We begin with the raw amino-acid sequence, 28 residues long: Grammistin Gs A (28 aa).

This sequence belongs to the grammistin family. Group 3 subfamily. Exists as aggregates of 3-4 molecules. Expressed by the skin glands.

The protein localises to the secreted. Thanks to its amphiphilic alpha-helice(s), it may integrate into membrane phospholipids, leading to lysis of the membrane. Has no substantial hemolytic activity. Has antibacterial activity with a broad spectrum against various species of bacteria including both Gram-positive and Gram-negative groups. This chain is Grammistin Gs A, found in Grammistes sexlineatus (Goldenstriped soapfish).